Here is an 842-residue protein sequence, read N- to C-terminus: Putative G-type lectin S-receptor-like serine/threonine-protein kinase At1g61610 (842 aa).

Positions 1 to 22 are cleaved as a signal peptide; it reads MAGFNRNLTLVTTLLIFHQLCS. Asn-7, Asn-23, Asn-35, Asn-60, Asn-110, Asn-123, Asn-304, Asn-351, and Asn-380 each carry an N-linked (GlcNAc...) asparagine glycan. Over 23–443 the chain is Extracellular; the sequence is NVSCSTSNSF…KLGGGKENST (421 aa). Residues 29–150 form the Bulb-type lectin domain; sequence SNSFTRNHTI…SDRRKWYWES (122 aa). One can recognise an EGF-like domain in the interval 292–331; it reads PSTECEKYNRCGNYSVCDDSKEFDSGKCSCIDGFEPVHQD. Cystine bridges form between Cys-296–Cys-308 and Cys-302–Cys-319. In terms of domain architecture, PAN spans 350–431; sequence CNQSLVAGQE…GGNSINIRLA (82 aa). Intrachain disulfides connect Cys-385–Cys-406 and Cys-389–Cys-395. N-linked (GlcNAc...) asparagine glycosylation is present at Asn-441. The chain crosses the membrane as a helical span at residues 444–464; the sequence is LWIIVFSVIGAFLLGLCIWIL. The Cytoplasmic segment spans residues 465–842; the sequence is WKFKKSLKAF…DVTFTTIVGR (378 aa). Residues 525–814 form the Protein kinase domain; it reads FAEENKLGQG…PRQPTFHSFL (290 aa). Residues 531–539 and Lys-553 each bind ATP; that span reads LGQGGFGTV. Position 559 is a phosphoserine (Ser-559). Residues 614–631 are caM-binding; it reads SKQGSLDWRKRWEVIGGI. The Proton acceptor role is filled by Asp-650. Ser-654 and Ser-667 each carry phosphoserine. Phosphothreonine is present on Thr-684. 2 positions are modified to phosphoserine: Ser-728 and Ser-830. The residue at position 837 (Thr-837) is a Phosphothreonine.

It belongs to the protein kinase superfamily. Ser/Thr protein kinase family.

The protein resides in the cell membrane. The catalysed reaction is L-seryl-[protein] + ATP = O-phospho-L-seryl-[protein] + ADP + H(+). It catalyses the reaction L-threonyl-[protein] + ATP = O-phospho-L-threonyl-[protein] + ADP + H(+). This is Putative G-type lectin S-receptor-like serine/threonine-protein kinase At1g61610 from Arabidopsis thaliana (Mouse-ear cress).